Here is a 741-residue protein sequence, read N- to C-terminus: Protein lin-54 homolog (741 aa).

A CRC domain is found at 513 to 626; it reads PRKPCNCTKS…KCIGCKNFEE (114 aa). The DNA-binding stretch occupies residues 515–528; it reads KPCNCTKSLCLKLY. Positions 517, 519, 524, 529, 531, 538, 541, 543, and 546 each coordinate Zn(2+). The linker stretch occupies residues 575–588; sequence IGKGKEGESDRRHS. Residues cysteine 591, cysteine 593, cysteine 598, cysteine 603, cysteine 605, cysteine 612, cysteine 616, cysteine 618, and cysteine 621 each contribute to the Zn(2+) site. The tract at residues 591–604 is DNA-binding; that stretch reads CNCKRSGCLKNYCE.

It belongs to the lin-54 family. As to quaternary structure, component of the DREAM complex.

Its subcellular location is the nucleus. Functionally, component of the DREAM complex, a multiprotein complex that can both act as a transcription activator or repressor depending on the context. Specifically recognizes the consensus motif 5'-TTYRAA-3' in target DNA. The sequence is that of Protein lin-54 homolog (lin54) from Xenopus tropicalis (Western clawed frog).